We begin with the raw amino-acid sequence, 97 residues long: MSERLSEETRGPLLGPLFANGWAMVDGRDAIAKTFAFDNFVEAMGWMMRVAIWAEKWNHHPEWSNVYGKVAVVLTTHDVDGLSALDAKLARKMDSLC.

This sequence belongs to the pterin-4-alpha-carbinolamine dehydratase family.

It carries out the reaction (4aS,6R)-4a-hydroxy-L-erythro-5,6,7,8-tetrahydrobiopterin = (6R)-L-erythro-6,7-dihydrobiopterin + H2O. This Ruegeria pomeroyi (strain ATCC 700808 / DSM 15171 / DSS-3) (Silicibacter pomeroyi) protein is Putative pterin-4-alpha-carbinolamine dehydratase.